The primary structure comprises 532 residues: Probable NAD kinase 1 (532 aa).

Residues 1–26 (MSLDELPHKVSDERVNHDTVTSHESE) are compositionally biased toward basic and acidic residues. Residues 1 to 32 (MSLDELPHKVSDERVNHDTVTSHESEIGSGSI) are disordered.

The protein belongs to the NAD kinase family.

It catalyses the reaction NAD(+) + ATP = ADP + NADP(+) + H(+). The protein is Probable NAD kinase 1 of Oryza sativa subsp. japonica (Rice).